The sequence spans 466 residues: MPHSYDYDAIVIGSGPGGEGAAMGLVKQGARVAVIERYQNVGGGCTHWGTIPSKALRHAVSRIIEFNQNPLYSDHSRLLRSSFADILNHADNVINQQTRMRQGFYERNHCEILQGNARFVDEHTLALDCPDGSVETLTAEKFVIACGSRPYHPTDVDFTHPRIYDSNSILSMHHEPRHVLIYGAGVIGCEYASIFRGMDVKVDLINTRDRLLAFLDQEMSDSLSYHFWNSGVVIRHNEEYEKIEGCDDGVIMHLKSGKKLKADCLLYANGRTGNTDSLALQNIGLETDSRGQLKVNSMYQTAQPHVYAVGDVIGYPSLASAAYDQGRIAAQALVKGEANAHLIEDIPTGIYTIPEISSVGKTEQQLTAMKVPYEVGRAQFKHLARAQIVGMNVGTLKILFHRETKEILGIHCFGERAAEIIHIGQAIMEQKGGGNTIEYFVNTTFNYPTMAEAYRVAALNGLNRLF.

FAD is bound at residue E36 to C45.

Belongs to the class-I pyridine nucleotide-disulfide oxidoreductase family. The cofactor is FAD.

Its subcellular location is the cytoplasm. The enzyme catalyses NAD(+) + NADPH = NADH + NADP(+). Conversion of NADPH, generated by peripheral catabolic pathways, to NADH, which can enter the respiratory chain for energy generation. The sequence is that of Soluble pyridine nucleotide transhydrogenase from Escherichia coli O81 (strain ED1a).